The chain runs to 132 residues: Small ribosomal subunit protein uS8 (132 aa).

It belongs to the universal ribosomal protein uS8 family. As to quaternary structure, part of the 30S ribosomal subunit. Contacts proteins S5 and S12.

Its function is as follows. One of the primary rRNA binding proteins, it binds directly to 16S rRNA central domain where it helps coordinate assembly of the platform of the 30S subunit. The chain is Small ribosomal subunit protein uS8 from Staphylococcus haemolyticus (strain JCSC1435).